We begin with the raw amino-acid sequence, 686 residues long: Acyl-CoA synthetase short-chain family member 3, mitochondrial (686 aa).

A mitochondrion-targeting transit peptide spans 1–29 (MKPSWLQCHKVTSAGGLGGPLPGSSPARG). 227–230 (EPGR) contributes to the CoA binding site. Residues 425 to 427 (GER) and 446 to 451 (DHWWQT) contribute to the ATP site. Residue lysine 518 is modified to N6-succinyllysine. At lysine 524 the chain carries N6-acetyllysine. ATP-binding residues include aspartate 539, arginine 554, and arginine 565. A CoA-binding site is contributed by arginine 624.

This sequence belongs to the ATP-dependent AMP-binding enzyme family.

It is found in the mitochondrion matrix. It catalyses the reaction acetate + ATP + CoA = acetyl-CoA + AMP + diphosphate. The catalysed reaction is propanoate + ATP + CoA = propanoyl-CoA + AMP + diphosphate. The enzyme catalyses butanoate + ATP + CoA = butanoyl-CoA + AMP + diphosphate. In terms of biological role, catalyzes the synthesis of acetyl-CoA from short-chain fatty acids. Propionate is the preferred substrate but can also utilize acetate and butyrate with a much lower affinity. The polypeptide is Acyl-CoA synthetase short-chain family member 3, mitochondrial (ACSS3) (Pongo abelii (Sumatran orangutan)).